The primary structure comprises 31 residues: Cyclotide mden-K (31 aa).

The segment at residues Gly1–Asn31 is a cross-link (cyclopeptide (Gly-Asn)). Disulfide bonds link Cys5-Cys21, Cys9-Cys23, and Cys14-Cys28.

Belongs to the cyclotide family. Bracelet subfamily. Post-translationally, this is a cyclic peptide.

Functionally, probably participates in a plant defense mechanism. This Melicytus dentatus (Tree violet) protein is Cyclotide mden-K.